Here is a 257-residue protein sequence, read N- to C-terminus: Neurotrophin-3 (257 aa).

The signal sequence occupies residues 1 to 18; the sequence is MSILFYVIFLAYLRGIQS. Residues 19–138 constitute a propeptide that is removed on maturation; that stretch reads TNMDQRSLPE…VLNRTSRRKR (120 aa). Asn131 carries N-linked (GlcNAc...) asparagine glycosylation. 3 disulfide bridges follow: Cys152-Cys217, Cys195-Cys246, and Cys205-Cys248.

It belongs to the NGF-beta family. In the embryo, the expression peak at E4.5 and decreases at later stages of development.

Its subcellular location is the secreted. Seems to promote the survival of visceral and proprioceptive sensory neurons. The protein is Neurotrophin-3 (NTF3) of Gallus gallus (Chicken).